Consider the following 476-residue polypeptide: Cysteine--tRNA ligase (476 aa).

C31 contributes to the Zn(2+) binding site. The short motif at P33 to N43 is the 'HIGH' region element. Zn(2+)-binding residues include C211, H236, and E240. The short motif at K269–S273 is the 'KMSKS' region element. K272 lines the ATP pocket.

It belongs to the class-I aminoacyl-tRNA synthetase family. As to quaternary structure, monomer. Requires Zn(2+) as cofactor.

It localises to the cytoplasm. It catalyses the reaction tRNA(Cys) + L-cysteine + ATP = L-cysteinyl-tRNA(Cys) + AMP + diphosphate. The chain is Cysteine--tRNA ligase from Xanthomonas oryzae pv. oryzae (strain MAFF 311018).